The chain runs to 418 residues: Voltage-gated ClC-type chloride channel ClcB (418 aa).

A topological domain (cytoplasmic) is located at residue M1. Residues 2–22 (FHRLLIATVVGILAAFAVAGF) traverse the membrane as a helical segment. Topologically, residues 23-53 (RHAMLLLEWLFLNNDSGSLVNAATNLSPWRR) are periplasmic. A helical transmembrane segment spans residues 54–74 (LLTPALGGLAAGLLLMGWQKF). Residues 75–145 (TQQRPHAPTD…QRFTPRQEWK (71 aa)) are Cytoplasmic-facing. Residues 146 to 166 (LWIACGAAAGMAAAYRAPLAG) traverse the membrane as a helical segment. The Periplasmic segment spans residues 167–177 (SLFIAEVLFGT). A helical membrane pass occupies residues 178-200 (MMLASLGPVIISAVVALLVSNLI). The Cytoplasmic portion of the chain corresponds to 201–221 (NHSDALLYNVQLSVTVQARDY). The helical transmembrane segment at 222–242 (ALIISTGVLAGLCGPLLLTLM) threads the bilayer. Residues 243–257 (NACHRGFVSLKLAPP) are Periplasmic-facing. Residues 258 to 278 (WQLALGGLIVGLLSLFTPAVW) form a helical membrane-spanning segment. Residues 279–290 (GNGYSTVQSFLT) lie on the Cytoplasmic side of the membrane. Residues 291-311 (APPLLMIIAGIFLCKLCAVLA) form a helical membrane-spanning segment. The Periplasmic segment spans residues 312–315 (SSGS). A helical membrane pass occupies residues 316–336 (GAPGGVFTPTLFIGLAIGMLY). Over 337–351 (GRSLGLWFPDGEEIT) the chain is Cytoplasmic. Residues 352–372 (LLLGLTGMATLLAATTHAPIM) form a helical membrane-spanning segment. Residues 373 to 379 (STLMICE) lie on the Periplasmic side of the membrane. A helical membrane pass occupies residues 380-400 (MTGEYQLLPGLLIACVIASVI). Residues 401–418 (SRTLHRDSIYRQHTAQHS) are Cytoplasmic-facing.

It belongs to the chloride channel (TC 2.A.49) family. ClcB subfamily.

It localises to the cell inner membrane. Its function is as follows. Probably acts as an electrical shunt for an outwardly-directed proton pump that is linked to amino acid decarboxylation, as part of the extreme acid resistance (XAR) response. The polypeptide is Voltage-gated ClC-type chloride channel ClcB (clcB) (Escherichia coli (strain K12)).